We begin with the raw amino-acid sequence, 471 residues long: 3-isopropylmalate dehydratase large subunit (471 aa).

Residues Cys351, Cys414, and Cys417 each contribute to the [4Fe-4S] cluster site.

It belongs to the aconitase/IPM isomerase family. LeuC type 1 subfamily. Heterodimer of LeuC and LeuD. [4Fe-4S] cluster serves as cofactor.

It carries out the reaction (2R,3S)-3-isopropylmalate = (2S)-2-isopropylmalate. It functions in the pathway amino-acid biosynthesis; L-leucine biosynthesis; L-leucine from 3-methyl-2-oxobutanoate: step 2/4. Catalyzes the isomerization between 2-isopropylmalate and 3-isopropylmalate, via the formation of 2-isopropylmaleate. The polypeptide is 3-isopropylmalate dehydratase large subunit (Colwellia psychrerythraea (strain 34H / ATCC BAA-681) (Vibrio psychroerythus)).